Here is a 443-residue protein sequence, read N- to C-terminus: Protein UIP5 (443 aa).

A signal peptide spans 1 to 27; sequence MSRDVRAEKLAISLLILSLFLIFQLVA. Residues 28–398 lie on the Perinuclear space side of the membrane; the sequence is EIYLNNGDQY…LFKVVLTIWH (371 aa). The chain crosses the membrane as a helical span at residues 399–420; the sequence is YSEILLLIMGIYLFSACIRVFQ. Topologically, residues 421–443 are cytoplasmic; that stretch reads RRFKKIRSRRKRAGSHSVGLLPM.

Its subcellular location is the nucleus membrane. The polypeptide is Protein UIP5 (UIP5) (Saccharomyces cerevisiae (strain ATCC 204508 / S288c) (Baker's yeast)).